We begin with the raw amino-acid sequence, 167 residues long: I-Kappa-B like protein I1 (167 aa).

3 ANK repeats span residues 54 to 86, 91 to 121, and 125 to 154; these read HGKQ…DING, FGNT…NMGI, and LFKT…QCRI.

Belongs to the polydnaviridae I-Kappa-B-like protein family.

Functionally, suppresses the host immune response through NF-kappa-B inactivation. Possesses ankyrin repeat domains required for NF-kappa-B binding but lacks the regulatory regions required for dissociation from NF-kappa-B and degradation. Therefore, prevents host NF-kappa-B release and subsequent activation. The sequence is that of I-Kappa-B like protein I1 (I1) from Microplitis demolitor (Parasitoid wasp).